The chain runs to 141 residues: Cytochrome c-type biogenesis protein CcmE (141 aa).

The Cytoplasmic segment spans residues 1 to 7 (MRARTRR). Residues 8 to 28 (LYTFGIAAALIVAAAALAFFA) traverse the membrane as a helical; Signal-anchor for type II membrane protein segment. Over 29 to 141 (LRENANLFYT…RELKPLEAGG (113 aa)) the chain is Periplasmic. Heme is bound by residues H125 and Y129.

The protein belongs to the CcmE/CycJ family.

It localises to the cell inner membrane. Functionally, heme chaperone required for the biogenesis of c-type cytochromes. Transiently binds heme delivered by CcmC and transfers the heme to apo-cytochromes in a process facilitated by CcmF and CcmH. This Hyphomonas neptunium (strain ATCC 15444) protein is Cytochrome c-type biogenesis protein CcmE.